A 977-amino-acid polypeptide reads, in one-letter code: Glutamate receptor 2 (977 aa).

The N-terminal stretch at 1-19 (MNKNLLVFGFLIFVKIGET) is a signal peptide. At 20-621 (SKKFPLRAFV…FSFMEPLGMT (602 aa)) the chain is on the extracellular side. Residues asparagine 36, asparagine 227, asparagine 291, asparagine 427, asparagine 532, and asparagine 566 are each glycosylated (N-linked (GlcNAc...) asparagine). Residues 622–642 (IWIFTLSSYFGVSLTIFLVSW) traverse the membrane as a helical segment. Residues 643–695 (FSPYEKRIEFKRGEFTVTNEFTLYNSLWFTLAAFMQQGTDILPRAVSGRIASS) lie on the Cytoplasmic side of the membrane. Residues 696–716 (CWWFFTLIIVSSYTANLAAFL) traverse the membrane as a helical segment. Residues 717 to 898 (TLERMTPPIE…GTSSSLNLSK (182 aa)) lie on the Extracellular side of the membrane. 2 N-linked (GlcNAc...) asparagine glycosylation sites follow: asparagine 783 and asparagine 895. Residues 899–919 (VAGIFYILLAGMVLSMCTALV) form a helical membrane-spanning segment. Over 920 to 977 (EFLFRKNKENREKERNRMRSSRPLKPGILASCERAKQKQLQNRRTKSEEVSTPRSTLF) the chain is Cytoplasmic. Residues 954 to 977 (AKQKQLQNRRTKSEEVSTPRSTLF) are disordered.

Belongs to the glutamate-gated ion channel (TC 1.A.10.1) family. As to expression, command interneurons of the locomotory control circuit (AIA, AIB, AVA, AVD, AVE, PVC, RIA, RIG and RIR) and motor neurons (AVG, M1, RMDD and RMDV).

Its subcellular location is the membrane. It localises to the postsynaptic cell membrane. In terms of biological role, L-glutamate acts as an excitatory neurotransmitter at many synapses in the central nervous system. The postsynaptic actions of glutamate are mediated by a variety of receptors that are named according to their selective agonists. Required for response to mechanical and osmotic stimuli. In Caenorhabditis elegans, this protein is Glutamate receptor 2 (glr-2).